The following is a 310-amino-acid chain: Cytochrome f (310 aa).

The signal sequence occupies residues 1-27; the sequence is MRRHLSLFLGSLVIGLALLIAPAASWA. Heme is bound by residues Tyr-28, Cys-48, Cys-51, and His-52. Residues 277–297 traverse the membrane as a helical segment; that stretch reads IYGLLAFFAAVALAQIMLVLK.

This sequence belongs to the cytochrome f family. In terms of assembly, the 4 large subunits of the cytochrome b6-f complex are cytochrome b6, subunit IV (17 kDa polypeptide, PetD), cytochrome f and the Rieske protein, while the 4 small subunits are PetG, PetL, PetM and PetN. The complex functions as a dimer. The cofactor is heme.

The protein resides in the cellular thylakoid membrane. Its function is as follows. Component of the cytochrome b6-f complex, which mediates electron transfer between photosystem II (PSII) and photosystem I (PSI), cyclic electron flow around PSI, and state transitions. The polypeptide is Cytochrome f (Synechococcus sp. (strain CC9605)).